We begin with the raw amino-acid sequence, 182 residues long: Adenylate kinase (182 aa).

12–17 (GAGKGT) is an ATP binding site. Residues 32–61 (STGELLRKEIEMNTNLGIQVKDIMNRGELV) are NMP. Residues threonine 33, arginine 38, 59–61 (ELV), 85–88 (GYPR), and glutamine 92 each bind AMP. Residues 126–132 (LRGRKDD) are LID. Position 127 (arginine 127) interacts with ATP. Positions 129 and 140 each coordinate AMP. Arginine 168 is an ATP binding site.

It belongs to the adenylate kinase family. In terms of assembly, monomer.

The protein localises to the cytoplasm. It catalyses the reaction AMP + ATP = 2 ADP. It functions in the pathway purine metabolism; AMP biosynthesis via salvage pathway; AMP from ADP: step 1/1. Functionally, catalyzes the reversible transfer of the terminal phosphate group between ATP and AMP. Plays an important role in cellular energy homeostasis and in adenine nucleotide metabolism. The sequence is that of Adenylate kinase from Prochlorococcus marinus (strain AS9601).